Consider the following 227-residue polypeptide: UPF0173 metal-dependent hydrolase BCAH820_4729 (227 aa).

It belongs to the UPF0173 family.

In Bacillus cereus (strain AH820), this protein is UPF0173 metal-dependent hydrolase BCAH820_4729.